Reading from the N-terminus, the 128-residue chain is Large ribosomal subunit protein bL12 (128 aa).

It belongs to the bacterial ribosomal protein bL12 family. In terms of assembly, homodimer. Part of the ribosomal stalk of the 50S ribosomal subunit. Forms a multimeric L10(L12)X complex, where L10 forms an elongated spine to which 2 to 4 L12 dimers bind in a sequential fashion. Binds GTP-bound translation factors.

In terms of biological role, forms part of the ribosomal stalk which helps the ribosome interact with GTP-bound translation factors. Is thus essential for accurate translation. This chain is Large ribosomal subunit protein bL12, found in Corynebacterium glutamicum (strain R).